Here is a 313-residue protein sequence, read N- to C-terminus: Protein-methionine-sulfoxide reductase catalytic subunit MsrP (313 aa).

A signal peptide (tat-type signal) is located at residues 1–46; it reads MPSYRAPKIAAAEITPERFFLDRRTFIAAAAGSLALSVPKPSRAAA. Mo-molybdopterin contacts are provided by residues N70, 73 to 74, C127, T162, N212, R217, and 228 to 230; these read YE and GIK.

It belongs to the MsrP family. As to quaternary structure, heterodimer of a catalytic subunit (MsrP) and a heme-binding subunit (MsrQ). The cofactor is Mo-molybdopterin. Predicted to be exported by the Tat system. The position of the signal peptide cleavage has not been experimentally proven.

It localises to the periplasm. The catalysed reaction is L-methionyl-[protein] + a quinone + H2O = L-methionyl-(S)-S-oxide-[protein] + a quinol. The enzyme catalyses L-methionyl-[protein] + a quinone + H2O = L-methionyl-(R)-S-oxide-[protein] + a quinol. In terms of biological role, part of the MsrPQ system that repairs oxidized periplasmic proteins containing methionine sulfoxide residues (Met-O), using respiratory chain electrons. Thus protects these proteins from oxidative-stress damage caused by reactive species of oxygen and chlorine generated by the host defense mechanisms. MsrPQ is essential for the maintenance of envelope integrity under bleach stress, rescuing a wide series of structurally unrelated periplasmic proteins from methionine oxidation. The catalytic subunit MsrP is non-stereospecific, being able to reduce both (R-) and (S-) diastereoisomers of methionine sulfoxide. The protein is Protein-methionine-sulfoxide reductase catalytic subunit MsrP of Rhizobium meliloti (strain 1021) (Ensifer meliloti).